Here is a 364-residue protein sequence, read N- to C-terminus: Dihydroorotate dehydrogenase (quinone) (364 aa).

FMN-binding positions include 78–82 and Thr-102; that span reads AGFDK. Lys-82 serves as a coordination point for substrate. 127 to 131 is a binding site for substrate; it reads NRMGF. Asn-156 and Asn-189 together coordinate FMN. Asn-189 contacts substrate. Catalysis depends on Ser-192, which acts as the Nucleophile. Asn-194 is a substrate binding site. Residues Lys-227 and Thr-255 each contribute to the FMN site. Position 256-257 (256-257) interacts with substrate; that stretch reads NT. FMN contacts are provided by residues Gly-285, Gly-314, and 335-336; that span reads YT.

This sequence belongs to the dihydroorotate dehydrogenase family. Type 2 subfamily. In terms of assembly, monomer. The cofactor is FMN.

Its subcellular location is the cell membrane. The catalysed reaction is (S)-dihydroorotate + a quinone = orotate + a quinol. It functions in the pathway pyrimidine metabolism; UMP biosynthesis via de novo pathway; orotate from (S)-dihydroorotate (quinone route): step 1/1. Functionally, catalyzes the conversion of dihydroorotate to orotate with quinone as electron acceptor. The polypeptide is Dihydroorotate dehydrogenase (quinone) (Thermosynechococcus vestitus (strain NIES-2133 / IAM M-273 / BP-1)).